We begin with the raw amino-acid sequence, 901 residues long: HTH-type transcriptional regulator MalT (901 aa).

ATP is bound at residue 39 to 46 (SPAGYGKT). The HTH luxR-type domain occupies 829–894 (ELIRTSPLTQ…DAVQHAQQLL (66 aa)). The segment at residues 853-872 (NEQIAGELEVAATTIKTHIR) is a DNA-binding region (H-T-H motif).

It belongs to the MalT family. In terms of assembly, monomer in solution. Oligomerizes to an active state in the presence of the positive effectors ATP and maltotriose.

Its activity is regulated as follows. Activated by ATP and maltotriose, which are both required for DNA binding. Positively regulates the transcription of the maltose regulon whose gene products are responsible for uptake and catabolism of malto-oligosaccharides. Specifically binds to the promoter region of its target genes, recognizing a short DNA motif called the MalT box. In Escherichia coli (strain K12 / MC4100 / BW2952), this protein is HTH-type transcriptional regulator MalT.